Reading from the N-terminus, the 149-residue chain is Probable flagellum biosynthesis repressor protein FlbT (149 aa).

It belongs to the FlbT family.

Its function is as follows. Has a post-transcriptional repressor function in flagellum biogenesis. Associates with the 5'-UTR of fljK mRNA and promotes its degradation. This Sinorhizobium medicae (strain WSM419) (Ensifer medicae) protein is Probable flagellum biosynthesis repressor protein FlbT.